A 451-amino-acid polypeptide reads, in one-letter code: L-seryl-tRNA(Sec) selenium transferase (451 aa).

Residue K286 is modified to N6-(pyridoxal phosphate)lysine.

Belongs to the SelA family. Pyridoxal 5'-phosphate serves as cofactor.

Its subcellular location is the cytoplasm. The catalysed reaction is L-seryl-tRNA(Sec) + selenophosphate + H(+) = L-selenocysteinyl-tRNA(Sec) + phosphate. The protein operates within aminoacyl-tRNA biosynthesis; selenocysteinyl-tRNA(Sec) biosynthesis; selenocysteinyl-tRNA(Sec) from L-seryl-tRNA(Sec) (bacterial route): step 1/1. Its function is as follows. Converts seryl-tRNA(Sec) to selenocysteinyl-tRNA(Sec) required for selenoprotein biosynthesis. The sequence is that of L-seryl-tRNA(Sec) selenium transferase from Aliarcobacter butzleri (strain RM4018) (Arcobacter butzleri).